We begin with the raw amino-acid sequence, 175 residues long: NADH-ubiquinone oxidoreductase chain 6 (175 aa).

A run of 5 helical transmembrane segments spans residues 1–21 (MVTY…VGVS), 25–45 (SPIY…GVVL), 47–67 (FGGS…MLVV), 88–108 (VVLG…IYAL), and 149–169 (YGVW…VIIM).

It belongs to the complex I subunit 6 family. In terms of assembly, core subunit of respiratory chain NADH dehydrogenase (Complex I) which is composed of 45 different subunits.

The protein localises to the mitochondrion inner membrane. The enzyme catalyses a ubiquinone + NADH + 5 H(+)(in) = a ubiquinol + NAD(+) + 4 H(+)(out). Its function is as follows. Core subunit of the mitochondrial membrane respiratory chain NADH dehydrogenase (Complex I) which catalyzes electron transfer from NADH through the respiratory chain, using ubiquinone as an electron acceptor. Essential for the catalytic activity and assembly of complex I. The polypeptide is NADH-ubiquinone oxidoreductase chain 6 (MT-ND6) (Balaenoptera musculus (Blue whale)).